Consider the following 274-residue polypeptide: Diaminopimelate epimerase (274 aa).

Residues Asn-11, Gln-44, and Asn-64 each contribute to the substrate site. The active-site Proton donor is the Cys-73. Substrate contacts are provided by residues 74–75, Asn-157, Asn-190, and 208–209; these read GN and ER. Cys-217 acts as the Proton acceptor in catalysis. 218–219 contributes to the substrate binding site; that stretch reads GS.

The protein belongs to the diaminopimelate epimerase family. In terms of assembly, homodimer.

It is found in the cytoplasm. It carries out the reaction (2S,6S)-2,6-diaminopimelate = meso-2,6-diaminopimelate. Its pathway is amino-acid biosynthesis; L-lysine biosynthesis via DAP pathway; DL-2,6-diaminopimelate from LL-2,6-diaminopimelate: step 1/1. Functionally, catalyzes the stereoinversion of LL-2,6-diaminopimelate (L,L-DAP) to meso-diaminopimelate (meso-DAP), a precursor of L-lysine and an essential component of the bacterial peptidoglycan. This chain is Diaminopimelate epimerase, found in Actinobacillus pleuropneumoniae serotype 7 (strain AP76).